We begin with the raw amino-acid sequence, 277 residues long: Putative envelope-preserving system protein Rv2742c (277 aa).

Residues 31–54 show a composition bias toward basic and acidic residues; the sequence is RDENRQRHAQVDVQRRRDQPERGQ. Disordered regions lie at residues 31 to 70, 113 to 133, and 180 to 210; these read RDEN…PDGR, QGSP…RLGR, and RQGS…HTAD. The segment covering 116 to 133 has biased composition (basic residues); the sequence is PRRRERRRGQTAHQRLGR.

Interacts with Rv2743c.

Functionally, involved in preservation of envelope integrity and tolerance to surface stress. Reverses the inhibitory effect of PspA on ClgR activity. Facilitates intracellular growth of M.tuberculosis. This chain is Putative envelope-preserving system protein Rv2742c, found in Mycobacterium tuberculosis (strain ATCC 25618 / H37Rv).